A 190-amino-acid polypeptide reads, in one-letter code: Lipid A 1-phosphatase (190 aa).

Helical transmembrane passes span 22–42 (LLALSLGLILLGIFAPFPKVP), 60–80 (FIPTILSVAIPLIQRDAVGLF), 117–137 (GNFNMPSGHSSMVGLAVAFLM), 145–162 (YFWLLPLVPLTMLARIYL), and 164–184 (MHTIGAVLTGLGVGMLCVSLF).

This sequence belongs to the lipid A LpxE 1-phosphatase family. Requires Does not require divalent cations. as cofactor.

It localises to the cell inner membrane. It functions in the pathway bacterial outer membrane biogenesis; LPS lipid A biosynthesis. Its function is as follows. Removes the 1-phosphate group from tetra- and probably hexaacylated lipid A species, has no requirement for the Kdo moiety of lipid A. Has no 4'-phosphatase activity. Has no activity on phospholipids (phosphatidylglycerol, phosphatidylethanolamine or cardiolipin). This enzyme has to act before EptA can attach phosphoethanolamine to the 1-position of lipid A. Absence of the 1-phosphate group renders the bacteria partially resistant to host-derived cationic antimicrobial peptides (CAMP), allowing it to camouflage itself from the host innate immune response, and plays a role in the long-term colonization of the host's stomach. In Helicobacter pylori (strain ATCC 700392 / 26695) (Campylobacter pylori), this protein is Lipid A 1-phosphatase.